The primary structure comprises 212 residues: Peroxiredoxin 2 (212 aa).

The 156-residue stretch at 7–162 (PLIGEKFPEM…ILRSIRALQL (156 aa)) folds into the Thioredoxin domain. C49 functions as the Cysteine sulfenic acid (-SOH) intermediate in the catalytic mechanism. R125 lines the substrate pocket.

The protein belongs to the peroxiredoxin family. Prx6 subfamily. Homodecamer. Pentamer of dimers that assemble into a ring structure.

The protein localises to the cytoplasm. The enzyme catalyses a hydroperoxide + [thioredoxin]-dithiol = an alcohol + [thioredoxin]-disulfide + H2O. Its function is as follows. Thiol-specific peroxidase that catalyzes the reduction of hydrogen peroxide and organic hydroperoxides to water and alcohols, respectively. Plays a role in cell protection against oxidative stress by detoxifying peroxides. This is Peroxiredoxin 2 from Sulfurisphaera tokodaii (strain DSM 16993 / JCM 10545 / NBRC 100140 / 7) (Sulfolobus tokodaii).